The primary structure comprises 328 residues: Chlorate reductase subunit beta (328 aa).

4Fe-4S ferredoxin-type domains are found at residues V6–R35, N125–E156, and G158–Q187. Positions 15, 18, 21, 25, 134, 137, and 142 each coordinate [4Fe-4S] cluster. 3 residues coordinate [3Fe-4S] cluster: C146, C167, and C173. C177, C194, C197, C209, and C213 together coordinate [4Fe-4S] cluster.

Heterotrimer of alpha, beta and gamma subunits. [3Fe-4S] cluster serves as cofactor. Requires [4Fe-4S] cluster as cofactor.

The protein localises to the periplasm. Its function is as follows. Electron transfer subunit of the terminal reductase during anaerobic growth on chlorate. This chain is Chlorate reductase subunit beta (clrB), found in Ideonella dechloratans.